Consider the following 504-residue polypeptide: Pentatricopeptide repeat-containing protein At1g05600 (504 aa).

PPR repeat units lie at residues 45–79, 80–114, 115–145, 151–185, 186–216, 225–259, 260–296, 297–331, 332–367, 368–398, 404–438, and 439–473; these read NGSV…SCEC, KDSV…NCVN, WSLS…YCYG, RITA…GCYP, DRDS…MFWR, DIVV…GLKA, PKRC…GAIP, CLDS…GFEP, TPFI…HCLP, TVGV…MSKQ, NEET…SHFP, and GVET…DMVP.

This sequence belongs to the PPR family. P subfamily.

The polypeptide is Pentatricopeptide repeat-containing protein At1g05600 (Arabidopsis thaliana (Mouse-ear cress)).